The chain runs to 276 residues: UDP-3-O-acyl-N-acetylglucosamine deacetylase (276 aa).

His-76, His-234, and Asp-238 together coordinate Zn(2+). Catalysis depends on His-261, which acts as the Proton donor.

The protein belongs to the LpxC family. Requires Zn(2+) as cofactor.

It carries out the reaction a UDP-3-O-[(3R)-3-hydroxyacyl]-N-acetyl-alpha-D-glucosamine + H2O = a UDP-3-O-[(3R)-3-hydroxyacyl]-alpha-D-glucosamine + acetate. Its pathway is glycolipid biosynthesis; lipid IV(A) biosynthesis; lipid IV(A) from (3R)-3-hydroxytetradecanoyl-[acyl-carrier-protein] and UDP-N-acetyl-alpha-D-glucosamine: step 2/6. Its function is as follows. Catalyzes the hydrolysis of UDP-3-O-myristoyl-N-acetylglucosamine to form UDP-3-O-myristoylglucosamine and acetate, the committed step in lipid A biosynthesis. This Synechocystis sp. (strain ATCC 27184 / PCC 6803 / Kazusa) protein is UDP-3-O-acyl-N-acetylglucosamine deacetylase.